We begin with the raw amino-acid sequence, 124 residues long: Large ribosomal subunit protein bL20 (124 aa).

It belongs to the bacterial ribosomal protein bL20 family.

Functionally, binds directly to 23S ribosomal RNA and is necessary for the in vitro assembly process of the 50S ribosomal subunit. It is not involved in the protein synthesizing functions of that subunit. The sequence is that of Large ribosomal subunit protein bL20 from Gemmatimonas aurantiaca (strain DSM 14586 / JCM 11422 / NBRC 100505 / T-27).